The primary structure comprises 1196 residues: uncharacterized protein (1196 aa).

The chain crosses the membrane as a helical span at residues 27-47; the sequence is ILLLLGSFILLNVWINVVTLL. Disordered stretches follow at residues 150-345, 367-402, 669-762, 775-806, 826-877, 960-1009, and 1168-1196; these read GGGE…PQAH, SSVPVPTSAPAPPGTLAPATTPVLAPTPAPVPASAP, TQDS…QKNT, CLTQSPGLHKKTPFTQTSDLQRSSGFTQDSGI, QATD…QDSE, YRSS…GPYK, and KCEALSPRRLHQEAPSNSGKPSRSGDIRM. The segment covering 157 to 177 has biased composition (polar residues); sequence VTASKAQASLLSRPETSSQFP. Composition is skewed to low complexity over residues 212-227 and 253-279; these read HSPTHTPVCTPTHPWT and THSQAQDTSAQAQAHTSAPTPAQTPAH. A compositionally biased stretch (polar residues) spans 299–321; sequence HTSAQAQTHSPPHTPEYTHSQAH. The segment covering 391–402 has biased composition (pro residues); sequence APTPAPVPASAP. Polar residues-rich tracts occupy residues 733–742, 750–762, 787–804, and 826–849; these read YLCQNPSPSQ, SGITQDSHPQKNT, PFTQTSDLQRSSGFTQDS, and QATDHQKNLGSSKDSGGHKNTGNV. Positions 962–971 are enriched in basic and acidic residues; the sequence is SSEHSQDSNL.

The protein localises to the membrane. This is an uncharacterized protein from Homo sapiens (Human).